A 300-amino-acid polypeptide reads, in one-letter code: 4-hydroxy-tetrahydrodipicolinate synthase (300 aa).

Position 45 (threonine 45) interacts with pyruvate. The Proton donor/acceptor role is filled by tyrosine 140. The active-site Schiff-base intermediate with substrate is the lysine 169. Valine 210 serves as a coordination point for pyruvate.

It belongs to the DapA family. As to quaternary structure, homotetramer; dimer of dimers.

It is found in the cytoplasm. The catalysed reaction is L-aspartate 4-semialdehyde + pyruvate = (2S,4S)-4-hydroxy-2,3,4,5-tetrahydrodipicolinate + H2O + H(+). It functions in the pathway amino-acid biosynthesis; L-lysine biosynthesis via DAP pathway; (S)-tetrahydrodipicolinate from L-aspartate: step 3/4. Catalyzes the condensation of (S)-aspartate-beta-semialdehyde [(S)-ASA] and pyruvate to 4-hydroxy-tetrahydrodipicolinate (HTPA). This Helicobacter acinonychis (strain Sheeba) protein is 4-hydroxy-tetrahydrodipicolinate synthase.